An 868-amino-acid polypeptide reads, in one-letter code: Leucine--tRNA ligase (868 aa).

The 'HIGH' region motif lies at 42-52 (PYPSGKLHMGH). The short motif at 627-631 (KMAKS) is the 'KMSKS' region element. Lys630 contacts ATP.

It belongs to the class-I aminoacyl-tRNA synthetase family.

The protein localises to the cytoplasm. It carries out the reaction tRNA(Leu) + L-leucine + ATP = L-leucyl-tRNA(Leu) + AMP + diphosphate. The polypeptide is Leucine--tRNA ligase (Pseudomonas fluorescens (strain Pf0-1)).